Reading from the N-terminus, the 223-residue chain is Putative 3-methyladenine DNA glycosylase (223 aa).

The protein belongs to the DNA glycosylase MPG family.

This chain is Putative 3-methyladenine DNA glycosylase, found in Rhodococcus jostii (strain RHA1).